Here is a 186-residue protein sequence, read N- to C-terminus: Ribonuclease M5 (186 aa).

Residues 6 to 89 (SQVIVVEGRD…AFLKRDEAVP (84 aa)) enclose the Toprim domain. Residues glutamate 12, aspartate 58, and aspartate 60 each coordinate Mg(2+).

It belongs to the ribonuclease M5 family. Mg(2+) is required as a cofactor.

The protein localises to the cytoplasm. The catalysed reaction is Endonucleolytic cleavage of RNA, removing 21 and 42 nucleotides, respectively, from the 5'- and 3'-termini of a 5S-rRNA precursor.. In terms of biological role, required for correct processing of both the 5' and 3' ends of 5S rRNA precursor. Cleaves both sides of a double-stranded region yielding mature 5S rRNA in one step. The chain is Ribonuclease M5 from Streptococcus pneumoniae (strain ATCC BAA-255 / R6).